A 142-amino-acid polypeptide reads, in one-letter code: Putative pre-16S rRNA nuclease (142 aa).

The protein belongs to the YqgF nuclease family.

Its subcellular location is the cytoplasm. Functionally, could be a nuclease involved in processing of the 5'-end of pre-16S rRNA. The protein is Putative pre-16S rRNA nuclease of Staphylococcus aureus (strain JH1).